The following is a 274-amino-acid chain: 2,3,4,5-tetrahydropyridine-2,6-dicarboxylate N-succinyltransferase (274 aa).

Substrate is bound by residues arginine 104 and aspartate 141.

It belongs to the transferase hexapeptide repeat family. As to quaternary structure, homotrimer.

It localises to the cytoplasm. The enzyme catalyses (S)-2,3,4,5-tetrahydrodipicolinate + succinyl-CoA + H2O = (S)-2-succinylamino-6-oxoheptanedioate + CoA. Its pathway is amino-acid biosynthesis; L-lysine biosynthesis via DAP pathway; LL-2,6-diaminopimelate from (S)-tetrahydrodipicolinate (succinylase route): step 1/3. This Salmonella arizonae (strain ATCC BAA-731 / CDC346-86 / RSK2980) protein is 2,3,4,5-tetrahydropyridine-2,6-dicarboxylate N-succinyltransferase.